The chain runs to 308 residues: uncharacterized protein (308 aa).

The chain crosses the membrane as a helical span at residues Tyr191 to Val211.

The protein resides in the host membrane. This is an uncharacterized protein from Saccharolobus islandicus (Sulfolobus islandicus).